A 263-amino-acid polypeptide reads, in one-letter code: 3-methyl-2-oxobutanoate hydroxymethyltransferase (263 aa).

Mg(2+) contacts are provided by Asp43 and Asp82. Residues 43–44, Asp82, and Lys111 contribute to the 3-methyl-2-oxobutanoate site; that span reads DS. Glu113 provides a ligand contact to Mg(2+). The active-site Proton acceptor is the Glu180.

It belongs to the PanB family. In terms of assembly, homodecamer; pentamer of dimers. Mg(2+) serves as cofactor.

It is found in the cytoplasm. It catalyses the reaction 3-methyl-2-oxobutanoate + (6R)-5,10-methylene-5,6,7,8-tetrahydrofolate + H2O = 2-dehydropantoate + (6S)-5,6,7,8-tetrahydrofolate. Its pathway is cofactor biosynthesis; (R)-pantothenate biosynthesis; (R)-pantoate from 3-methyl-2-oxobutanoate: step 1/2. In terms of biological role, catalyzes the reversible reaction in which hydroxymethyl group from 5,10-methylenetetrahydrofolate is transferred onto alpha-ketoisovalerate to form ketopantoate. This Bdellovibrio bacteriovorus (strain ATCC 15356 / DSM 50701 / NCIMB 9529 / HD100) protein is 3-methyl-2-oxobutanoate hydroxymethyltransferase.